Consider the following 348-residue polypeptide: Fructose-1,6-bisphosphatase (348 aa).

The short motif at 2–5 (PTLV) is the Pro/N-degron element. S12 is subject to Phosphoserine. Residues 27-31 (IIEHQ) and 38-42 (TGDFT) contribute to the AMP site. 2 residues coordinate Mg(2+): D79 and E108. Residue 122 to 123 (SY) coordinates AMP. Mg(2+)-binding residues include D128, I130, and D131. Substrate is bound at residue 131–134 (DGSS). An AMP-binding site is contributed by R150. Residues 222–225 (NEGN), 255–260 (RYVGSM), Y276, and 286–288 (KLR) contribute to the substrate site. Mg(2+) is bound at residue E292.

Belongs to the FBPase class 1 family. Homotetramer. The cofactor is Mg(2+). In terms of processing, ubiquitinated. Targeted for proteasomal degradation when cells are shifted to glucose-containing growth medium.

It catalyses the reaction beta-D-fructose 1,6-bisphosphate + H2O = beta-D-fructose 6-phosphate + phosphate. It participates in carbohydrate biosynthesis; gluconeogenesis. With respect to regulation, subject to complex allosteric regulation. The enzyme can assume an active R-state, or an inactive T-state. Intermediate conformations may exist. AMP acts as allosteric inhibitor. AMP binding affects the turnover of bound substrate and not the affinity for substrate. The protein is Fructose-1,6-bisphosphatase (FBP1) of Saccharomyces cerevisiae (strain ATCC 204508 / S288c) (Baker's yeast).